Consider the following 313-residue polypeptide: Postacrosomal sheath WW domain-binding protein (313 aa).

One can recognise a GRAM domain in the interval 8–87 (TESRRGALIP…GLMSDCTIEQ (80 aa)). 12 consecutive repeat copies span residues 179 to 185 (YGPPPPG), 193 to 199 (YGTPPEG), 207 to 213 (YGAPPMG), 214 to 220 (YGAPPVG), 221 to 227 (YGVPPGG), 228 to 234 (YGVPPGG), 235 to 241 (YGVPPGG), 242 to 248 (YGAPPGG), 249 to 255 (YGVPPGG), 256 to 262 (YGAPPGG), 263 to 269 (YGAPPAG), and 270 to 276 (YGAPPAG). The interval 179 to 276 (YGPPPPGYTV…PAGYGAPPAG (98 aa)) is 12 X 7 AA tandem repeat of Y-G-X-P-P-X-G. The short motif at 183–186 (PPGY) is the PPxY motif 1 element. Gly residues predominate over residues 254-264 (GGYGAPPGGYG). The segment at 254–313 (GGYGAPPGGYGAPPAGYGAPPAGNEALPPAYEAPSAGNTAASHRSMTAQQETSLPTTSSS) is disordered. The span at 265–276 (APPAGYGAPPAG) shows a compositional bias: low complexity. A PPxY motif 2 motif is present at residues 281–284 (PPAY). Positions 289-313 (AGNTAASHRSMTAQQETSLPTTSSS) are enriched in polar residues.

Expressed in testis.

Functionally, may play a role in meiotic resumption and pronuclear formation, mediated by a WW domain-signaling pathway during fertilization. This chain is Postacrosomal sheath WW domain-binding protein (WBP2NL), found in Bos taurus (Bovine).